The sequence spans 194 residues: Fe/S biogenesis protein NfuA (194 aa).

[4Fe-4S] cluster-binding residues include Cys-152 and Cys-155.

The protein belongs to the NfuA family. Homodimer. The cofactor is [4Fe-4S] cluster.

In terms of biological role, involved in iron-sulfur cluster biogenesis. Binds a 4Fe-4S cluster, can transfer this cluster to apoproteins, and thereby intervenes in the maturation of Fe/S proteins. Could also act as a scaffold/chaperone for damaged Fe/S proteins. The sequence is that of Fe/S biogenesis protein NfuA from Pseudomonas aeruginosa (strain LESB58).